The sequence spans 347 residues: Vitellogenin-3 (347 aa).

Residues Met1–Ala15 form the signal peptide. An N-linked (GlcNAc...) asparagine glycan is attached at Asn80. Positions Pro104–Ser118 are enriched in low complexity. Disordered stretches follow at residues Pro104–Cys174 and Gln200–Gly234. Residues Pro124 to Ile133 show a composition bias toward basic and acidic residues. The span at Ser144–Ser163 shows a compositional bias: low complexity. Residues Ser164–Cys174 show a composition bias toward basic and acidic residues. The N-linked (GlcNAc...) asparagine glycan is linked to Asn208. Over residues Ser209–Ser219 the composition is skewed to low complexity.

In terms of processing, phosvitin, an egg yolk storage protein, is one of the most highly phosphorylated (10%) proteins in nature. Cathepsin D is responsible for intraoocytic processing of vitellogenin. Post-translationally, may contain intrachain disulfide bonds. In terms of tissue distribution, produced by the liver, secreted into the blood and then sequestered by receptor mediated endocytosis into growing oocytes, where it is generally cleaved, giving rise to the respective yolk components.

Its function is as follows. Precursor of the egg-yolk proteins that are sources of nutrients during early development of oviparous organisms. Phosvitin is believed to be of importance in sequestering calcium, iron and other cations for the developing embryo. The chain is Vitellogenin-3 (VTG3) from Gallus gallus (Chicken).